The sequence spans 706 residues: Polyribonucleotide nucleotidyltransferase (706 aa).

2 residues coordinate Mg(2+): Asp486 and Asp492. In terms of domain architecture, KH spans Pro552–Ile611. The region spanning Gly621–Lys689 is the S1 motif domain.

This sequence belongs to the polyribonucleotide nucleotidyltransferase family. The cofactor is Mg(2+).

Its subcellular location is the cytoplasm. It catalyses the reaction RNA(n+1) + phosphate = RNA(n) + a ribonucleoside 5'-diphosphate. Involved in mRNA degradation. Catalyzes the phosphorolysis of single-stranded polyribonucleotides processively in the 3'- to 5'-direction. The sequence is that of Polyribonucleotide nucleotidyltransferase from Thiobacillus denitrificans (strain ATCC 25259 / T1).